The following is a 418-amino-acid chain: Putative ion-transport protein YfeO (418 aa).

11 consecutive transmembrane segments (helical) span residues 9 to 31 (MLLL…IMVM), 55 to 77 (SPLW…IRFS), 90 to 112 (LIGA…LGLA), 122 to 140 (PIIT…RLLP), 147 to 169 (WTIL…AALI), 189 to 211 (PLMA…FSLP), 223 to 244 (ILSG…VWCL), 259 to 281 (FVLG…VSLF), 301 to 323 (YFLL…FRGG), 343 to 363 (VPAV…VLVV), and 376 to 398 (VVVP…WLLL).

It belongs to the chloride channel (TC 2.A.49) family.

It is found in the cell membrane. The chain is Putative ion-transport protein YfeO (yfeO) from Escherichia coli O6:H1 (strain CFT073 / ATCC 700928 / UPEC).